The following is a 262-amino-acid chain: Cyclin-dependent kinase inhibitor 1 (262 aa).

The segment at 140–212 (SDVAEAGSEH…SAQQATRPKI (73 aa)) is disordered. Residues 160–169 (SGRDRERRET) show a composition bias toward basic and acidic residues. Positions 198 to 208 (SAATASAQQAT) are enriched in low complexity.

Belongs to the CDI family. ICK/KRP subfamily.

This is Cyclin-dependent kinase inhibitor 1 (KRP1) from Oryza sativa subsp. indica (Rice).